The chain runs to 711 residues: Double-stranded RNA-specific editase 1 (711 aa).

The disordered stretch occupies residues 1–79 (MDIEDEENMS…RRKTPGPVLP (79 aa)). The span at 63 to 73 (SKYRLKKRRKT) shows a compositional bias: basic residues. The region spanning 78–144 (LPKNALMQLN…AEKALRSFVQ (67 aa)) is the DRBM 1 domain. Interaction with substrate RNA stretches follow at residues 83–88 (LMQLNE) and 104–105 (VH). The residue at position 149 (Ser-149) is a Phosphoserine. Residues 176-220 (LFNGFETPDKSEPPFYVGSNGDDSFSSSGDVSLSASPVPASLTQP) are disordered. The segment covering 192–213 (VGSNGDDSFSSSGDVSLSASPV) has biased composition (low complexity). The 68-residue stretch at 231–298 (PSGKNPVMIL…AQSALATVFN (68 aa)) folds into the DRBM 2 domain. Interaction with substrate RNA stretches follow at residues 237-242 (VMILNE) and His-259. An A to I editase domain is found at 370-707 (SVSTGTKCIN…VEKPTEQDQF (338 aa)). His-394 lines the Zn(2+) pocket. Glu-396 (proton donor) is an active-site residue. Residues Arg-400 and Arg-401 each coordinate 1D-myo-inositol hexakisphosphate. Residues Cys-451 and Cys-526 each contribute to the Zn(2+) site. Lys-529, Arg-532, Lys-639, Lys-672, Lys-682, and Lys-700 together coordinate 1D-myo-inositol hexakisphosphate.

In terms of assembly, homodimer. Homodimerization is essential for its catalytic activity. Can form heterodimers with isoform 5 of ADAR/ADAR1. 1D-myo-inositol hexakisphosphate is required as a cofactor. In terms of tissue distribution, brain and peripheral tissues.

It is found in the nucleus. Its subcellular location is the nucleolus. The enzyme catalyses adenosine in double-stranded RNA + H2O + H(+) = inosine in double-stranded RNA + NH4(+). Its function is as follows. Catalyzes the hydrolytic deamination of adenosine to inosine in double-stranded RNA (dsRNA) referred to as A-to-I RNA editing. This may affect gene expression and function in a number of ways that include mRNA translation by changing codons and hence the amino acid sequence of proteins; pre-mRNA splicing by altering splice site recognition sequences; RNA stability by changing sequences involved in nuclease recognition; genetic stability in the case of RNA virus genomes by changing sequences during viral RNA replication; and RNA structure-dependent activities such as microRNA production or targeting or protein-RNA interactions. Can edit both viral and cellular RNAs and can edit RNAs at multiple sites (hyper-editing) or at specific sites (site-specific editing). Its cellular RNA substrates include: bladder cancer-associated protein (BLCAP), neurotransmitter receptors for glutamate (GRIA2 and GRIK2) and serotonin (HTR2C), GABA receptor (GABRA3) and potassium voltage-gated channel (KCNA1). Site-specific RNA editing of transcripts encoding these proteins results in amino acid substitutions which consequently alter their functional activities. Edits GRIA2 at both the Q/R and R/G sites efficiently but converts the adenosine in hotspot1 much less efficiently. Can inhibit cell proliferation and migration and can stimulate exocytosis. The protein is Double-stranded RNA-specific editase 1 (Adarb1) of Rattus norvegicus (Rat).